A 586-amino-acid polypeptide reads, in one-letter code: Pyruvate kinase (586 aa).

Arg32 provides a ligand contact to substrate. Asn34, Ser36, Asp66, and Thr67 together coordinate K(+). 34–37 (NFSH) lines the ATP pocket. ATP is bound by residues Arg73 and Lys156. Glu222 contacts Mg(2+). 3 residues coordinate substrate: Gly245, Asp246, and Thr278. Asp246 serves as a coordination point for Mg(2+).

This sequence belongs to the pyruvate kinase family. In the C-terminal section; belongs to the PEP-utilizing enzyme family. Requires Mg(2+) as cofactor. K(+) is required as a cofactor.

It catalyses the reaction pyruvate + ATP = phosphoenolpyruvate + ADP + H(+). The protein operates within carbohydrate degradation; glycolysis; pyruvate from D-glyceraldehyde 3-phosphate: step 5/5. This is Pyruvate kinase (pyk) from Staphylococcus saprophyticus subsp. saprophyticus (strain ATCC 15305 / DSM 20229 / NCIMB 8711 / NCTC 7292 / S-41).